The chain runs to 198 residues: Dual specificity protein phosphatase 14 (198 aa).

A Tyrosine-protein phosphatase domain is found at 26-167 (GIAQITSSLF…LIDYESQLFG (142 aa)). The active-site Phosphocysteine intermediate is cysteine 111.

This sequence belongs to the protein-tyrosine phosphatase family. Non-receptor class dual specificity subfamily.

The enzyme catalyses O-phospho-L-tyrosyl-[protein] + H2O = L-tyrosyl-[protein] + phosphate. It carries out the reaction O-phospho-L-seryl-[protein] + H2O = L-seryl-[protein] + phosphate. The catalysed reaction is O-phospho-L-threonyl-[protein] + H2O = L-threonyl-[protein] + phosphate. Functionally, involved in the inactivation of MAP kinases. Dephosphorylates ERK, JNK and p38 MAP-kinases. Plays a negative role in TCR signaling by dephosphorylating MAP3K7 adapter TAB1 leading to its inactivation. This Mus musculus (Mouse) protein is Dual specificity protein phosphatase 14 (Dusp14).